Here is a 73-residue protein sequence, read N- to C-terminus: MKSSIHVVLFFLLSLVASMALPRRQAQAPFAVVDFSGKAACHSILTSCRVDTDCCAGLKCGIFDEDALCVPQG.

The signal sequence occupies residues 1 to 20 (MKSSIHVVLFFLLSLVASMA). Disulfide bonds link Cys-41–Cys-55, Cys-48–Cys-60, and Cys-54–Cys-69.

The protein belongs to the UPF0499 family.

Its subcellular location is the secreted. This chain is UPF0499 protein CHGG_06021, found in Chaetomium globosum (strain ATCC 6205 / CBS 148.51 / DSM 1962 / NBRC 6347 / NRRL 1970) (Soil fungus).